We begin with the raw amino-acid sequence, 192 residues long: MLLSDRDLAAEIKAGTLALEPFDPALVQPSSIDVRLDKLFRVFNNHLYTHIDPSRQQDDLTSAVEVPDGEPFVLHPGEFVLASTLEVISLGDQLAGRLEGKSSLGRLGLLTHSTAGFIDPGFSGHVTLELSNVANLPIMLWPGMKIGQLCIFRLCSPAEHPYGSAVYGSRYQGQRGPTPSRSWQSWRTWPTR.

Residues 101 to 106 (KSSLGR), Asp-119, 127 to 129 (TLE), Gln-148, Tyr-162, and Gln-174 contribute to the dCTP site. Catalysis depends on Glu-129, which acts as the Proton donor/acceptor. A disordered region spans residues 169 to 192 (SRYQGQRGPTPSRSWQSWRTWPTR). A compositionally biased stretch (polar residues) spans 171–192 (YQGQRGPTPSRSWQSWRTWPTR).

It belongs to the dCTP deaminase family. Homotrimer.

It carries out the reaction dCTP + 2 H2O = dUMP + NH4(+) + diphosphate. It functions in the pathway pyrimidine metabolism; dUMP biosynthesis; dUMP from dCTP: step 1/1. In terms of biological role, bifunctional enzyme that catalyzes both the deamination of dCTP to dUTP and the hydrolysis of dUTP to dUMP without releasing the toxic dUTP intermediate. The sequence is that of dCTP deaminase, dUMP-forming from Salinispora tropica (strain ATCC BAA-916 / DSM 44818 / JCM 13857 / NBRC 105044 / CNB-440).